We begin with the raw amino-acid sequence, 1062 residues long: Integrin alpha-8 (1062 aa).

The signal sequence occupies residues 1–35 (MSAGTHCGPPGNRAPPFARLCCVSAALGMLWSPAC). Residues 36 to 1010 (LAFNLDVDKL…ATPNVSFSIP (975 aa)) lie on the Extracellular side of the membrane. FG-GAP repeat units lie at residues 41 to 104 (DVDK…RSAQ), 121 to 182 (NGTK…AYAE), 187 to 239 (RNSN…IANY), 252 to 305 (KQTD…STDM), 306 to 371 (TFIQ…LLFQ), 372 to 430 (DPQV…GLHS), and 434 to 497 (QVLQ…LHPM). An N-linked (GlcNAc...) asparagine glycan is attached at Asn80. The cysteines at positions 95 and 105 are disulfide-linked. Asn121 is a glycosylation site (N-linked (GlcNAc...) asparagine). An intrachain disulfide couples Cys149 to Cys170. Asn176 carries an N-linked (GlcNAc...) asparagine glycan. Residues Cys186 and Cys199 are joined by a disulfide bond. N-linked (GlcNAc...) asparagine glycosylation occurs at Asn238. Positions 274, 276, 278, and 282 each coordinate Ca(2+). 2 N-linked (GlcNAc...) asparagine glycosylation sites follow: Asn301 and Asn310. Positions 328, 330, 332, 336, 394, 396, 398, 400, and 402 each coordinate Ca(2+). The Cell attachment site motif lies at 454 to 456 (RGD). Ca(2+) is bound by residues Asp458, Asp460, Asn462, Tyr464, and Asp466. Asn503 carries an N-linked (GlcNAc...) asparagine glycan. 2 disulfides stabilise this stretch: Cys506/Cys517 and Cys523/Cys579. N-linked (GlcNAc...) asparagine glycosylation is found at Asn600 and Asn604. 2 disulfide bridges follow: Cys640/Cys646 and Cys712/Cys725. Asn718, Asn736, Asn752, Asn779, Asn895, and Asn922 each carry an N-linked (GlcNAc...) asparagine glycan. Cystine bridges form between Cys866/Cys923 and Cys928/Cys933. Asn1004 carries N-linked (GlcNAc...) asparagine glycosylation. Residues 1011–1031 (LWVIILAILLGLLVLAILTLA) traverse the membrane as a helical segment. The Cytoplasmic portion of the chain corresponds to 1032–1062 (LWKCGFFDRARPPQDEMTDREQLTSDKTPEA).

This sequence belongs to the integrin alpha chain family. In terms of assembly, heterodimer of an alpha and a beta subunit. The alpha subunit is composed of a heavy and a light chain linked by a disulfide bond. Alpha-8 associates with beta-1. As to expression, in brain, expressed in deep cortex, hippocampal CA1, basolateral amygdala and striatum. In kidney, expressed in glomerular mesengium (at protein level).

It is found in the membrane. Its subcellular location is the cell membrane. Its function is as follows. Integrin alpha-8/beta-1 functions in the genesis of kidney and probably of other organs by regulating the recruitment of mesenchymal cells into epithelial structures. It recognizes the sequence R-G-D in a wide array of ligands including TNC, FN1, SPP1 TGFB1, TGFB3 and VTN. NPNT is probably its functional ligand in kidney genesis. Neuronal receptor for TNC it mediates cell-cell interactions and regulates neurite outgrowth of sensory and motor neurons. The sequence is that of Integrin alpha-8 (Itga8) from Mus musculus (Mouse).